A 219-amino-acid chain; its full sequence is Oligoribonuclease (219 aa).

Residues 30 to 193 enclose the Exonuclease domain; the sequence is LVWLDMEMTG…ADIVESIEEL (164 aa). Tyr151 is an active-site residue.

Belongs to the oligoribonuclease family.

The protein localises to the cytoplasm. 3'-to-5' exoribonuclease specific for small oligoribonucleotides. The sequence is that of Oligoribonuclease from Ralstonia nicotianae (strain ATCC BAA-1114 / GMI1000) (Ralstonia solanacearum).